The primary structure comprises 650 residues: A-kinase anchor protein 10, mitochondrial (650 aa).

The N-terminal 16 residues, 1–16 (RALRPDPGPAMSFFRR), are a transit peptide targeting the mitochondrion. Disordered regions lie at residues 1-45 (RALR…QKST) and 168-192 (SSLA…ESLD). S40 carries the post-translational modification Phosphoserine. 2 RGS domains span residues 113 to 356 (TLEQ…CKYQ) and 366 to 493 (YLAD…YKYL). A Phosphoserine modification is found at S268. The disordered stretch occupies residues 512-535 (LAAQGSGGPPDDPLPGASDPSASQ). A compositionally biased stretch (low complexity) spans 525-535 (LPGASDPSASQ). The PKA-RII subunit binding stretch occupies residues 622–635 (LAWKIAKMIVSDVM).

It is found in the mitochondrion. It localises to the membrane. The protein resides in the cytoplasm. Its function is as follows. Differentially targeted protein that binds to type I and II regulatory subunits of protein kinase A and anchors them to the mitochondria or the plasma membrane. Although the physiological relevance between PKA and AKAPS with mitochondria is not fully understood, one idea is that BAD, a proapoptotic member, is phosphorylated and inactivated by mitochondria-anchored PKA. It cannot be excluded too that it may facilitate PKA as well as G protein signal transduction, by acting as an adapter for assembling multiprotein complexes. With its RGS domain, it could lead to the interaction to G-alpha proteins, providing a link between the signaling machinery and the downstream kinase. The polypeptide is A-kinase anchor protein 10, mitochondrial (AKAP10) (Sus scrofa (Pig)).